A 153-amino-acid polypeptide reads, in one-letter code: Ribonuclease K6 (153 aa).

Positions M1–Q27 are cleaved as a signal peptide. The active-site Proton acceptor is H41. Intrachain disulfides connect C49-C107, C63-C117, C81-C132, and C88-C95. N58 is a glycosylation site (N-linked (GlcNAc...) asparagine). K64–T68 contacts substrate. The N-linked (GlcNAc...) asparagine glycan is linked to N85. K89 provides a ligand contact to substrate. H148 functions as the Proton donor in the catalytic mechanism.

It belongs to the pancreatic ribonuclease family. Interacts (via N-terminus) with bacterial lipopolysaccharide (LPS). Highly expressed in spleen (at protein level). Has little or no expression in healthy kidneys (at protein level). Detected at high levels in infected kidneys (at protein level). Expressed at low levels in bladder. Also detected in skeletal muscle, heart and bone marrow.

It localises to the secreted. It is found in the lysosome. Its subcellular location is the cytoplasmic granule. In terms of biological role, ribonuclease which shows a preference for the pyrimidines uridine and cytosine. Has potent antibacterial activity against a range of Gram-positive and Gram-negative bacteria, including P.aeruginosa, A.baumanii, M.luteus, S.aureus, E.faecalis, E.faecium, S.saprophyticus and E.coli. Causes loss of bacterial membrane integrity, and also promotes agglutination of Gram-negative bacteria. Probably contributes to urinary tract sterility. Bactericidal activity is independent of RNase activity. This Mus musculus (Mouse) protein is Ribonuclease K6 (Rnase6).